Reading from the N-terminus, the 228-residue chain is Cytochrome b-c1 complex subunit Rieske, mitochondrial (228 aa).

The transit peptide at 1-26 (MLAKQFISKSLASSLRRLLPVSSTAS) directs the protein to the mitochondrion. Topologically, residues 27-63 (SLKGSMMTIPKFTSIRTYTDSPEMPDFSEYQTKSTGD) are mitochondrial matrix. Residues 64-93 (RSRVISYAMVGTMGALTAAGAQATVHDFLA) form a helical membrane-spanning segment. At 94-228 (SWSASADVLA…TFEGSKIIIG (135 aa)) the chain is on the mitochondrial intermembrane side. The region spanning 139-227 (IQEANSVDIS…YTFEGSKIII (89 aa)) is the Rieske domain. Positions 172, 174, 191, and 194 each coordinate [2Fe-2S] cluster. C177 and C193 form a disulfide bridge.

The protein belongs to the Rieske iron-sulfur protein family. In terms of assembly, component of the ubiquinol-cytochrome c oxidoreductase (cytochrome b-c1 complex, complex III, CIII), a multisubunit enzyme composed of 3 respiratory subunits cytochrome b, cytochrome c1 and Rieske protein, 2 core protein subunits, and additional low-molecular weight protein subunits. The complex exists as an obligatory dimer and forms supercomplexes (SCs) in the inner mitochondrial membrane with cytochrome c oxidase (complex IV, CIV). The cofactor is [2Fe-2S] cluster.

The protein localises to the mitochondrion inner membrane. The catalysed reaction is a quinol + 2 Fe(III)-[cytochrome c](out) = a quinone + 2 Fe(II)-[cytochrome c](out) + 2 H(+)(out). Functionally, component of the ubiquinol-cytochrome c oxidoreductase, a multisubunit transmembrane complex that is part of the mitochondrial electron transport chain which drives oxidative phosphorylation. The respiratory chain contains 3 multisubunit complexes succinate dehydrogenase (complex II, CII), ubiquinol-cytochrome c oxidoreductase (cytochrome b-c1 complex, complex III, CIII) and cytochrome c oxidase (complex IV, CIV), that cooperate to transfer electrons derived from NADH and succinate to molecular oxygen, creating an electrochemical gradient over the inner membrane that drives transmembrane transport and the ATP synthase. The cytochrome b-c1 complex catalyzes electron transfer from ubiquinol to cytochrome c, linking this redox reaction to translocation of protons across the mitochondrial inner membrane, with protons being carried across the membrane as hydrogens on the quinol. In the process called Q cycle, 2 protons are consumed from the matrix, 4 protons are released into the intermembrane space and 2 electrons are passed to cytochrome c. The Rieske protein is a catalytic core subunit containing a [2Fe-2S] iron-sulfur cluster. It cycles between 2 conformational states during catalysis to transfer electrons from the quinol bound in the Q(0) site in cytochrome b to cytochrome c1. The protein is Cytochrome b-c1 complex subunit Rieske, mitochondrial (rip1) of Schizosaccharomyces pombe (strain 972 / ATCC 24843) (Fission yeast).